The following is a 323-amino-acid chain: tRNA U34 carboxymethyltransferase (323 aa).

Carboxy-S-adenosyl-L-methionine contacts are provided by residues K91, W105, K110, G130, 152–154 (DPT), 181–182 (IE), M196, Y200, and R315.

This sequence belongs to the class I-like SAM-binding methyltransferase superfamily. CmoB family. In terms of assembly, homotetramer.

It catalyses the reaction carboxy-S-adenosyl-L-methionine + 5-hydroxyuridine(34) in tRNA = 5-carboxymethoxyuridine(34) in tRNA + S-adenosyl-L-homocysteine + H(+). Catalyzes carboxymethyl transfer from carboxy-S-adenosyl-L-methionine (Cx-SAM) to 5-hydroxyuridine (ho5U) to form 5-carboxymethoxyuridine (cmo5U) at position 34 in tRNAs. This Salmonella enteritidis PT4 (strain P125109) protein is tRNA U34 carboxymethyltransferase.